Reading from the N-terminus, the 218-residue chain is Ras-related protein RabT2 (218 aa).

32–39 (GDYKTGKG) is a binding site for GTP. Residues 54 to 61 (VSSIGVDF) carry the Effector region motif. GTP contacts are provided by residues 80–84 (DANSC) and 140–143 (NKCD). Cys-215 bears the Cysteine methyl ester mark. Residue Cys-215 is the site of S-geranylgeranyl cysteine attachment. The propeptide at 216–218 (NIL) is removed in mature form.

This sequence belongs to the small GTPase superfamily. Rab family.

The protein resides in the cell membrane. The sequence is that of Ras-related protein RabT2 (rabT2) from Dictyostelium discoideum (Social amoeba).